Reading from the N-terminus, the 299-residue chain is Centriolar and ciliogenesis-associated protein HYLS1 (299 aa).

At Ser179 the chain carries Phosphoserine.

The protein belongs to the HYLS1 family.

Its subcellular location is the cytoplasm. The protein localises to the cell projection. It localises to the cilium. It is found in the cytoskeleton. The protein resides in the microtubule organizing center. Its subcellular location is the centrosome. The protein localises to the centriole. Functionally, plays a role in ciliogenesis. The polypeptide is Centriolar and ciliogenesis-associated protein HYLS1 (Homo sapiens (Human)).